A 405-amino-acid polypeptide reads, in one-letter code: uncharacterized protein (405 aa).

A run of 12 helical transmembrane segments spans residues 19 to 39 (ILSIVMFNFASYLTIGLPLAV), 47 to 67 (VMGFSAFWAGLVISLQYFATL), 85 to 105 (IVVFGLCGCFLSGLGYLTAGL), 129 to 149 (SFAGTGSTLWGVGVVGSLHIG), 157 to 177 (IVTYGAMAMGAPLGVVFYHWG), 178 to 198 (GLQALALIIMGVALVAILLAI), 224 to 244 (GMALALASAGFGVIATFITLF), 252 to 272 (GAAFALTLFSCAFVGTRLLFP), 283 to 303 (VAMICFSVEIIGLLLVGVATM), 309 to 329 (IGVLLAGAGFSLVFPALGVVA), 344 to 364 (TYTVFMDLSLGVTGPLAGLVM), and 366 to 386 (WAGVPVIYLAAAGLVAIALLL).

It belongs to the major facilitator superfamily. YhhS family.

The protein resides in the cell inner membrane. This is an uncharacterized protein from Escherichia coli O157:H7.